The sequence spans 174 residues: UPF0316 protein LMOf2365_1801 (174 aa).

Helical transmembrane passes span 4 to 24 (GIFI…IYTV), 36 to 56 (LAAL…SLVL), and 62 to 82 (IANV…GMKI).

It belongs to the UPF0316 family.

It localises to the cell membrane. The protein is UPF0316 protein LMOf2365_1801 of Listeria monocytogenes serotype 4b (strain F2365).